The following is a 578-amino-acid chain: Vi polysaccharide biosynthesis protein VipC/TviE (578 aa).

It functions in the pathway glycan metabolism; Vi-antigen biosynthesis. Its pathway is capsule biogenesis; capsule polysaccharide biosynthesis. This Salmonella typhi protein is Vi polysaccharide biosynthesis protein VipC/TviE (vipC).